Reading from the N-terminus, the 70-residue chain is Large ribosomal subunit protein bL31c (70 aa).

This sequence belongs to the bacterial ribosomal protein bL31 family. Type A subfamily. As to quaternary structure, part of the 50S ribosomal subunit.

The protein localises to the plastid. Its subcellular location is the chloroplast. In terms of biological role, binds the 23S rRNA. This Porphyra purpurea (Red seaweed) protein is Large ribosomal subunit protein bL31c.